Reading from the N-terminus, the 120-residue chain is Photosystem II extrinsic protein U (120 aa).

An N-terminal signal peptide occupies residues 1–29; sequence MKRLLSLLTGVLVMTGLLMALIFPQSAYA.

Belongs to the PsbU family. As to quaternary structure, PSII is composed of 1 copy each of membrane proteins PsbA, PsbB, PsbC, PsbD, PsbE, PsbF, PsbH, PsbI, PsbJ, PsbK, PsbL, PsbM, PsbT, PsbX, PsbY, Psb30/Ycf12, peripheral proteins PsbO, CyanoQ (PsbQ), PsbU, PsbV and a large number of cofactors. It forms dimeric complexes.

It localises to the cellular thylakoid membrane. Functionally, one of the extrinsic, lumenal subunits of photosystem II (PSII). PSII is a light-driven water plastoquinone oxidoreductase, using light energy to abstract electrons from H(2)O, generating a proton gradient subsequently used for ATP formation. The extrinsic proteins stabilize the structure of photosystem II oxygen-evolving complex (OEC), the ion environment of oxygen evolution and protect the OEC against heat-induced inactivation. The sequence is that of Photosystem II extrinsic protein U from Prochlorococcus marinus (strain MIT 9303).